The following is a 94-amino-acid chain: Na(+)/H(+) antiporter subunit F (94 aa).

3 helical membrane-spanning segments follow: residues 2–22 (FTLI…LYVI), 34–54 (VVAL…VSIL), and 59–79 (AFLD…IAFS).

This sequence belongs to the CPA3 antiporters (TC 2.A.63) subunit F family. In terms of assembly, forms a heterooligomeric complex that consists of seven subunits: MrpA, MrpB, MrpC, MrpD, MrpE, MrpF and MrpG.

The protein resides in the cell membrane. Its function is as follows. Mrp complex is a Na(+)/H(+) antiporter that is considered to be the major Na(+) excretion system in B.subtilis. Has a major role in Na(+) resistance and a minor role in Na(+)- and K(+)-dependent pH homeostasis as compared to TetB. MrpA may be the actual Na(+)/H(+) antiporter, although the six other Mrp proteins are all required for Na(+)/H(+) antiport activity and Na(+) resistance. MrpA is required for initiation of sporulation when external Na(+) concentration increases. Also transports Li(+) but not K(+), Ca(2+) or Mg(2+). Functionally, involved in cholate and Na(+) efflux activities, which may be mechanistically coupled. Does not require other Mrp proteins for its own function. The protein is Na(+)/H(+) antiporter subunit F (mrpF) of Bacillus subtilis (strain 168).